The chain runs to 621 residues: ATP-dependent lipid A-core flippase (621 aa).

The next 5 helical transmembrane spans lie at 32–52 (IVAA…LAAF), 91–111 (VWGT…LVVI), 192–212 (IVLL…FPLL), 286–306 (SPFS…IALW), and 312–332 (YTTI…YAPI). Residues 33-344 (VAALIAIFGV…LANISIPMQT (312 aa)) form the ABC transmembrane type-1 domain. One can recognise an ABC transporter domain in the interval 378–611 (FRNVDVEYRS…NGYYTMLRNI (234 aa)). Position 410-417 (410-417 (GRSGSGKS)) interacts with ATP.

This sequence belongs to the ABC transporter superfamily. Lipid exporter (TC 3.A.1.106) family. As to quaternary structure, homodimer.

It is found in the cell inner membrane. The catalysed reaction is ATP + H2O + lipid A-core oligosaccharideSide 1 = ADP + phosphate + lipid A-core oligosaccharideSide 2.. In terms of biological role, involved in lipopolysaccharide (LPS) biosynthesis. Translocates lipid A-core from the inner to the outer leaflet of the inner membrane. Transmembrane domains (TMD) form a pore in the inner membrane and the ATP-binding domain (NBD) is responsible for energy generation. In Neisseria meningitidis serogroup A / serotype 4A (strain DSM 15465 / Z2491), this protein is ATP-dependent lipid A-core flippase.